Consider the following 469-residue polypeptide: uncharacterized protein (469 aa).

Residues 152-161 (VREGKEEKKG) are compositionally biased toward basic and acidic residues. The segment at 152-174 (VREGKEEKKGGPPGRGPPGWRRR) is disordered. 2 coiled-coil regions span residues 346-375 (KAAL…RSES) and 423-453 (SDIT…KIKG).

This is an uncharacterized protein from Homo sapiens (Human).